The chain runs to 204 residues: Ribonuclease HII (204 aa).

The RNase H type-2 domain occupies 14 to 204 (QYICGVDEVG…SFKLSCLGEK (191 aa)). A divalent metal cation is bound by residues aspartate 20, glutamate 21, and aspartate 116.

The protein belongs to the RNase HII family. Mn(2+) is required as a cofactor. Requires Mg(2+) as cofactor.

It localises to the cytoplasm. It carries out the reaction Endonucleolytic cleavage to 5'-phosphomonoester.. Its function is as follows. Endonuclease that specifically degrades the RNA of RNA-DNA hybrids. This chain is Ribonuclease HII, found in Chloroherpeton thalassium (strain ATCC 35110 / GB-78).